A 219-amino-acid polypeptide reads, in one-letter code: Thiamine-phosphate synthase (219 aa).

4-amino-2-methyl-5-(diphosphooxymethyl)pyrimidine-binding positions include 44–48 and Asn-79; that span reads QFREK. Mg(2+) is bound by residues Asp-80 and Asp-99. Ser-117 is a binding site for 4-amino-2-methyl-5-(diphosphooxymethyl)pyrimidine. 2-[(2R,5Z)-2-carboxy-4-methylthiazol-5(2H)-ylidene]ethyl phosphate is bound at residue 143–145; that stretch reads TST. Lys-146 serves as a coordination point for 4-amino-2-methyl-5-(diphosphooxymethyl)pyrimidine. Residues Gly-175 and 195-196 each bind 2-[(2R,5Z)-2-carboxy-4-methylthiazol-5(2H)-ylidene]ethyl phosphate; that span reads IS.

Belongs to the thiamine-phosphate synthase family. The cofactor is Mg(2+).

The catalysed reaction is 2-[(2R,5Z)-2-carboxy-4-methylthiazol-5(2H)-ylidene]ethyl phosphate + 4-amino-2-methyl-5-(diphosphooxymethyl)pyrimidine + 2 H(+) = thiamine phosphate + CO2 + diphosphate. The enzyme catalyses 2-(2-carboxy-4-methylthiazol-5-yl)ethyl phosphate + 4-amino-2-methyl-5-(diphosphooxymethyl)pyrimidine + 2 H(+) = thiamine phosphate + CO2 + diphosphate. It carries out the reaction 4-methyl-5-(2-phosphooxyethyl)-thiazole + 4-amino-2-methyl-5-(diphosphooxymethyl)pyrimidine + H(+) = thiamine phosphate + diphosphate. It participates in cofactor biosynthesis; thiamine diphosphate biosynthesis; thiamine phosphate from 4-amino-2-methyl-5-diphosphomethylpyrimidine and 4-methyl-5-(2-phosphoethyl)-thiazole: step 1/1. Functionally, condenses 4-methyl-5-(beta-hydroxyethyl)thiazole monophosphate (THZ-P) and 2-methyl-4-amino-5-hydroxymethyl pyrimidine pyrophosphate (HMP-PP) to form thiamine monophosphate (TMP). The sequence is that of Thiamine-phosphate synthase from Bacillus cereus (strain ATCC 14579 / DSM 31 / CCUG 7414 / JCM 2152 / NBRC 15305 / NCIMB 9373 / NCTC 2599 / NRRL B-3711).